Consider the following 221-residue polypeptide: Lipoprotein-releasing system ATP-binding protein LolD (221 aa).

One can recognise an ABC transporter domain in the interval 8–220 (LKMISKHYKQ…YNLKHGLLNI (213 aa)). 42–49 (GSSGSGKS) provides a ligand contact to ATP.

Belongs to the ABC transporter superfamily. Lipoprotein translocase (TC 3.A.1.125) family. As to quaternary structure, the complex is composed of two ATP-binding proteins (LolD) and two transmembrane proteins (LolC and LolE).

The protein localises to the cell inner membrane. In terms of biological role, part of the ABC transporter complex LolCDE involved in the translocation of mature outer membrane-directed lipoproteins, from the inner membrane to the periplasmic chaperone, LolA. Responsible for the formation of the LolA-lipoprotein complex in an ATP-dependent manner. This chain is Lipoprotein-releasing system ATP-binding protein LolD, found in Rickettsia prowazekii (strain Madrid E).